A 157-amino-acid polypeptide reads, in one-letter code: Phosphopantetheine adenylyltransferase (157 aa).

Ser-8 is a binding site for substrate. ATP contacts are provided by residues 8-9 (SF) and His-16. Positions 40, 72, and 86 each coordinate substrate. Residues 87-89 (GLR), Glu-97, and 122-128 (FSFLSSS) contribute to the ATP site.

Belongs to the bacterial CoaD family. As to quaternary structure, homohexamer. Mg(2+) serves as cofactor.

The protein resides in the cytoplasm. It carries out the reaction (R)-4'-phosphopantetheine + ATP + H(+) = 3'-dephospho-CoA + diphosphate. Its pathway is cofactor biosynthesis; coenzyme A biosynthesis; CoA from (R)-pantothenate: step 4/5. Functionally, reversibly transfers an adenylyl group from ATP to 4'-phosphopantetheine, yielding dephospho-CoA (dPCoA) and pyrophosphate. In Prochlorococcus marinus (strain MIT 9211), this protein is Phosphopantetheine adenylyltransferase.